The primary structure comprises 250 residues: Triosephosphate isomerase (250 aa).

Substrate is bound at residue 9–11 (NWK). Histidine 96 serves as the catalytic Electrophile. Glutamate 166 (proton acceptor) is an active-site residue. Substrate-binding positions include glycine 172, serine 212, and 233–234 (GG).

Belongs to the triosephosphate isomerase family. In terms of assembly, homodimer.

The protein resides in the cytoplasm. The catalysed reaction is D-glyceraldehyde 3-phosphate = dihydroxyacetone phosphate. The protein operates within carbohydrate biosynthesis; gluconeogenesis. It functions in the pathway carbohydrate degradation; glycolysis; D-glyceraldehyde 3-phosphate from glycerone phosphate: step 1/1. Functionally, involved in the gluconeogenesis. Catalyzes stereospecifically the conversion of dihydroxyacetone phosphate (DHAP) to D-glyceraldehyde-3-phosphate (G3P). The chain is Triosephosphate isomerase from Chlorobium luteolum (strain DSM 273 / BCRC 81028 / 2530) (Pelodictyon luteolum).